A 180-amino-acid polypeptide reads, in one-letter code: MSRLKKLYTEEIRKSLQEKFGYTNTMQIPVLKKIVISMGLAEAAKDKNLFQAHLEELSMISGQKPLVTKARNSIAGFKLREGQGIGAKVTLRGERMYDFMDRFCNIVSPRIRDFRGFSKKGDGRGCYSLGLEDQQIFPEVDLDRVKRTQGMNITWVTTAQTDAECTTLLELMGLRFKKAQ.

Belongs to the universal ribosomal protein uL5 family. In terms of assembly, part of the 50S ribosomal subunit; part of the 5S rRNA/L5/L18/L25 subcomplex. Contacts the 5S rRNA and the P site tRNA. Forms a bridge to the 30S subunit in the 70S ribosome.

In terms of biological role, this is one of the proteins that bind and probably mediate the attachment of the 5S RNA into the large ribosomal subunit, where it forms part of the central protuberance. In the 70S ribosome it contacts protein S13 of the 30S subunit (bridge B1b), connecting the 2 subunits; this bridge is implicated in subunit movement. Contacts the P site tRNA; the 5S rRNA and some of its associated proteins might help stabilize positioning of ribosome-bound tRNAs. The chain is Large ribosomal subunit protein uL5 from Chlamydia felis (strain Fe/C-56) (Chlamydophila felis).